Here is a 346-residue protein sequence, read N- to C-terminus: Free fatty acid receptor 3 (346 aa).

Residues 1 to 19 (MDTGPDQSYFSGNHWFVFS) are Extracellular-facing. Residues 20-40 (VYLLTFLVGLPLNLLALVVFV) traverse the membrane as a helical segment. Topologically, residues 41-47 (GKLQRRP) are cytoplasmic. A helical membrane pass occupies residues 48-68 (VAVDVLLLNLTASDLLLLLFL). Over 69–88 (PFRMVEAANGMHWPLPFILC) the chain is Extracellular. A disulfide bridge connects residues Cys88 and Cys169. A helical transmembrane segment spans residues 89-111 (PLSGFIFFTTIYLTALFLAAVSI). At 112-132 (ERFLSVAHPLWYKTRPRLGQA) the chain is on the cytoplasmic side. The helical transmembrane segment at 133 to 153 (GLVSVACWLLASAHCSVVYVI) threads the bilayer. The Extracellular segment spans residues 154 to 178 (EFSGDISHSQGTNGTCYLEFRKDQL). Asn166 carries an N-linked (GlcNAc...) asparagine glycan. A helical transmembrane segment spans residues 179 to 199 (AILLPVRLEMAVVLFVVPLII). Residues 200 to 222 (TSYCYSRLVWILGRGGSHRRQRR) lie on the Cytoplasmic side of the membrane. A helical membrane pass occupies residues 223–243 (VAGLLAATLLNFLVCFGPYNV). At 244–258 (SHVVGYICGESPAWR) the chain is on the extracellular side. Residues 259 to 279 (IYVTLLSTLNSCVDPFVYYFS) form a helical membrane-spanning segment. Over 280-346 (SSGFQADFHE…TGGQVACAES (67 aa)) the chain is Cytoplasmic. Residues 307–330 (MELKEQKGGEEQRADRPAERKTSE) are compositionally biased toward basic and acidic residues. Positions 307–346 (MELKEQKGGEEQRADRPAERKTSEHSQGCGTGGQVACAES) are disordered.

It belongs to the G-protein coupled receptor 1 family. Highest level in adipose tissue, and lower expression across all tissues tested. Expressed in sympathetic ganglia.

The protein resides in the cell membrane. Functionally, g protein-coupled receptor that is activated by a major product of dietary fiber digestion, the short chain fatty acids (SCFAs), and that plays a role in the regulation of whole-body energy homeostasis and in intestinal immunity. In omnivorous mammals, the short chain fatty acids acetate, propionate and butyrate are produced primarily by the gut microbiome that metabolizes dietary fibers. SCFAs serve as a source of energy but also act as signaling molecules. That G protein-coupled receptor is probably coupled to the pertussis toxin-sensitive, G(i/o)-alpha family of G proteins. Its activation results in the formation of inositol 1,4,5-trisphosphate, the mobilization of intracellular calcium, the phosphorylation of the MAPK3/ERK1 and MAPK1/ERK2 kinases and the inhibition of intracellular cAMP accumulation. Activated by SCFAs and by beta-hydroxybutyrate, a ketone body produced by the liver upon starvation, it inhibits N-type calcium channels and modulates the activity of sympathetic neurons through a signaling cascade involving the beta and gamma subunits of its coupled G protein, phospholipase C and MAP kinases. Thereby, it may regulate energy expenditure through the control of the sympathetic nervous system that controls for instance heart rate. Upon activation by SCFAs accumulating in the intestine, it may also signal to the brain via neural circuits which in turn would regulate intestinal gluconeogenesis. May also control the production of hormones involved in whole-body energy homeostasis. May for instance, regulate blood pressure through renin secretion. May also regulate secretion of the PYY peptide by enteroendocrine cells and control gut motility, intestinal transit rate, and the harvesting of energy from SCFAs produced by gut microbiota. May also indirectly regulate the production of LEP/Leptin, a hormone acting on the CNS to inhibit food intake, in response to the presence of short-chain fatty acids in the intestine. Finally, may also play a role in glucose homeostasis. Besides its role in energy homeostasis, may play a role in intestinal immunity. May mediate the activation of the inflammatory and immune response by SCFAs in the gut, regulating the rapid production of chemokines and cytokines by intestinal epithelial cells. Among SCFAs, the fatty acids containing less than 6 carbons, the most potent activators are probably propionate, butyrate and pentanoate while acetate is a poor activator. This Homo sapiens (Human) protein is Free fatty acid receptor 3 (FFAR3).